A 214-amino-acid chain; its full sequence is Variable small protein 1 (214 aa).

An N-terminal signal peptide occupies residues M1–S18. C19 carries N-palmitoyl cysteine lipidation. Residue C19 is the site of S-diacylglycerol cysteine attachment.

Belongs to the variable small protein (Vsp) family.

It localises to the cell outer membrane. The Vlp and Vsp proteins are antigenically distinct proteins, only one vlp or vsp gene is transcriptionally active at any one time. Switching between these genes is a mechanism of host immune response evasion. The chain is Variable small protein 1 from Borrelia hermsii.